A 358-amino-acid polypeptide reads, in one-letter code: Chorismate synthase (358 aa).

The disordered stretch occupies residues 39–61; the sequence is ADIQPFLDKRRPGQSRHTTQRQE. The NADP(+) site is built by arginine 48 and arginine 54. Residues 125-127, 237-238, glycine 284, 299-303, and arginine 325 each bind FMN; these read RSS, NA, and KPTSS.

It belongs to the chorismate synthase family. As to quaternary structure, homotetramer. Requires FMNH2 as cofactor.

It catalyses the reaction 5-O-(1-carboxyvinyl)-3-phosphoshikimate = chorismate + phosphate. It participates in metabolic intermediate biosynthesis; chorismate biosynthesis; chorismate from D-erythrose 4-phosphate and phosphoenolpyruvate: step 7/7. Catalyzes the anti-1,4-elimination of the C-3 phosphate and the C-6 proR hydrogen from 5-enolpyruvylshikimate-3-phosphate (EPSP) to yield chorismate, which is the branch point compound that serves as the starting substrate for the three terminal pathways of aromatic amino acid biosynthesis. This reaction introduces a second double bond into the aromatic ring system. In Sphingopyxis alaskensis (strain DSM 13593 / LMG 18877 / RB2256) (Sphingomonas alaskensis), this protein is Chorismate synthase.